Here is a 299-residue protein sequence, read N- to C-terminus: MSAKPEVGLVREASRQIVAGGSAGLVEICLMHPLDVVKTRFQIQRCATDPNSYKSLVDSFRMIFQTERLFGFYKGILPPILAETPKRAVKFFTFEQYKKLLGYVSLSPALTFTIAGLGSGLTEAIVVNPFEVVKVGLQANRNTFAKQPSTVGYARQIIKKEGWGLQGLNKGLTATLGRHGVFNMVYFGFYYNVKNMIPVNKDPTLEFLRKFGIGLLSGTIASVINIPFDVAKSRIQGPQPVPGEIKYRTCFKTMATVYQEEGILALYKGLLPKIMRLGPGGAVMLLVYEYTYSWLQENW.

Solcar repeat units follow at residues 11–100 (REAS…YKKL), 107–196 (SPAL…VKNM), and 205–294 (LEFL…TYSW). 6 helical membrane passes run 17–37 (IVAG…LDVV), 70–89 (FGFY…KRAV), 113–133 (TIAG…FEVV), 167–187 (GLNK…MVYF), 205–225 (LEFL…SVIN), and 277–297 (LGPG…WLQE).

It belongs to the mitochondrial carrier (TC 2.A.29) family.

The protein localises to the mitochondrion inner membrane. The catalysed reaction is 2-oxoadipate(in) + 2-oxoglutarate(out) = 2-oxoadipate(out) + 2-oxoglutarate(in). The enzyme catalyses hexanedioate(in) + 2-oxoglutarate(out) = hexanedioate(out) + 2-oxoglutarate(in). It catalyses the reaction L-2-aminoadipate(in) + 2-oxoglutarate(out) = L-2-aminoadipate(out) + 2-oxoglutarate(in). It carries out the reaction glutarate(in) + 2-oxoglutarate(out) = glutarate(out) + 2-oxoglutarate(in). The catalysed reaction is 2-oxoheptanedioate(in) + 2-oxoglutarate(out) = 2-oxoheptanedioate(out) + 2-oxoglutarate(in). The enzyme catalyses heptanedioate(in) + 2-oxoglutarate(out) = heptanedioate(out) + 2-oxoglutarate(in). It catalyses the reaction citrate(in) + 2-oxoglutarate(out) = citrate(out) + 2-oxoglutarate(in). Functionally, transports dicarboxylates across the inner membranes of mitochondria by a counter-exchange mechanism. Can transport 2-oxoadipate (2-oxohexanedioate), 2-oxoglutarate, adipate (hexanedioate), glutarate, and to a lesser extent, pimelate (heptanedioate), 2-oxopimelate (2-oxoheptanedioate), 2-aminoadipate (2-aminohexanedioate), oxaloacetate, and citrate. Plays a central role in catabolism of lysine, hydroxylysine, and tryptophan, by transporting common metabolite intermediates (such as 2-oxoadipate) into the mitochondria, where it is converted into acetyl-CoA and can enter the citric acid (TCA) cycle. The polypeptide is Mitochondrial 2-oxodicarboxylate carrier (SLC25A21) (Pongo abelii (Sumatran orangutan)).